The following is a 178-amino-acid chain: Colicin-A immunity protein (178 aa).

Residues 1 to 13 (MMNEHSIDTDNRK) lie on the Cytoplasmic side of the membrane. A helical transmembrane segment spans residues 14–37 (ANNALYLFIIIGLIPLLCIFVVYY). Over 38–68 (KTPDALLLRKIATSTENLPSITSSYNPLMTK) the chain is Periplasmic. The helical transmembrane segment at 69–89 (VMDIYCKTAPFLALILYILTF) threads the bilayer. Topologically, residues 90 to 105 (KIRKLINNTDRNTVLR) are cytoplasmic. The helical transmembrane segment at 106–123 (SCLLSPLVYAAIVYLFCF) threads the bilayer. Residues 124 to 142 (RNFELTTAGRPVRLMATND) are Periplasmic-facing. Residues 143 to 165 (ATLLLFYIGLYSIIFFTTYITLF) traverse the membrane as a helical segment. The Cytoplasmic portion of the chain corresponds to 166 to 178 (TPVTAFKLLKKRQ).

Its subcellular location is the cell inner membrane. Functionally, this protein is able to protect a cell, which harbors the plasmid ColA encoding colicin A, against colicin A. This Citrobacter freundii protein is Colicin-A immunity protein (cai).